The following is a 308-amino-acid chain: Ribosomal RNA small subunit methyltransferase H (308 aa).

Residues 34-36 (GGH), Asp54, Phe80, Asp101, and Gln108 contribute to the S-adenosyl-L-methionine site.

It belongs to the methyltransferase superfamily. RsmH family.

It localises to the cytoplasm. It carries out the reaction cytidine(1402) in 16S rRNA + S-adenosyl-L-methionine = N(4)-methylcytidine(1402) in 16S rRNA + S-adenosyl-L-homocysteine + H(+). In terms of biological role, specifically methylates the N4 position of cytidine in position 1402 (C1402) of 16S rRNA. This chain is Ribosomal RNA small subunit methyltransferase H, found in Ureaplasma parvum serovar 3 (strain ATCC 27815 / 27 / NCTC 11736).